The primary structure comprises 757 residues: Catalase-peroxidase (757 aa).

The tryptophyl-tyrosyl-methioninium (Trp-Tyr) (with M-274) cross-link spans Trp101–Tyr248. Residue His102 is the Proton acceptor of the active site. Positions Ser210 to Asp231 are disordered. A compositionally biased stretch (basic and acidic residues) spans Gly212–Asp231. A cross-link (tryptophyl-tyrosyl-methioninium (Tyr-Met) (with W-101)) is located at residues Tyr248–Met274. His289 lines the heme b pocket. Residues Lys293–Leu312 are disordered.

The protein belongs to the peroxidase family. Peroxidase/catalase subfamily. In terms of assembly, homodimer or homotetramer. Requires heme b as cofactor. In terms of processing, formation of the three residue Trp-Tyr-Met cross-link is important for the catalase, but not the peroxidase activity of the enzyme.

It carries out the reaction H2O2 + AH2 = A + 2 H2O. The enzyme catalyses 2 H2O2 = O2 + 2 H2O. Its function is as follows. Bifunctional enzyme with both catalase and broad-spectrum peroxidase activity. The sequence is that of Catalase-peroxidase from Xylella fastidiosa (strain M12).